Consider the following 327-residue polypeptide: Probable cell division protein WhiA (327 aa).

The H-T-H motif DNA-binding region spans 275–308; that stretch reads SLEELGRLADPPMTKDAVAGRIRRLLSMADRKAK. Residues 304–327 are disordered; that stretch reads DRKAKQDGIPDTESAVTPDLLEDA.

Belongs to the WhiA family.

Functionally, involved in cell division and chromosome segregation. This Mycolicibacterium gilvum (strain PYR-GCK) (Mycobacterium gilvum (strain PYR-GCK)) protein is Probable cell division protein WhiA.